Consider the following 376-residue polypeptide: tRNA (guanine(26)-N(2))-dimethyltransferase (376 aa).

Residues 4–373 (VAVKEGLARI…APFGVVAEVM (370 aa)) form the Trm1 methyltransferase domain. Arg36, Arg61, Asp78, Asp120, and Ala121 together coordinate S-adenosyl-L-methionine.

The protein belongs to the class I-like SAM-binding methyltransferase superfamily. Trm1 family.

The enzyme catalyses guanosine(26) in tRNA + 2 S-adenosyl-L-methionine = N(2)-dimethylguanosine(26) in tRNA + 2 S-adenosyl-L-homocysteine + 2 H(+). Functionally, dimethylates a single guanine residue at position 26 of a number of tRNAs using S-adenosyl-L-methionine as donor of the methyl groups. The protein is tRNA (guanine(26)-N(2))-dimethyltransferase of Thermococcus kodakarensis (strain ATCC BAA-918 / JCM 12380 / KOD1) (Pyrococcus kodakaraensis (strain KOD1)).